A 218-amino-acid polypeptide reads, in one-letter code: Heart- and neural crest derivatives-expressed protein 1 (218 aa).

Disordered stretches follow at residues Met-1 to His-23, Ala-56 to Ser-112, and Ala-172 to Gly-203. Over residues Ala-8–Pro-21 the composition is skewed to basic residues. The span at Ala-68–Gly-92 shows a compositional bias: low complexity. Positions Leu-95–Arg-107 are enriched in basic residues. A bHLH domain is found at Arg-97–Leu-149. Thr-110 bears the Phosphothreonine; by PLK4 mark. The residue at position 112 (Ser-112) is a Phosphoserine; by PLK4.

In terms of assembly, efficient DNA binding requires dimerization with another bHLH protein. Forms homodimers and heterodimers with TCF3 gene products E12 and E47, HAND2 and HEY1, HEY2 and HEYL (hairy-related transcription factors). Interacts with MDFIC. Interacts with SOX15; the interaction enhances HAND1-induced differentiation of trophoblast giant cells. Phosphorylation by PLK4 disrupts the interaction with MDFIC and leads to translocation into the nucleoplasm, allowing dimerization and transcription factor activity.

The protein resides in the nucleus. It localises to the nucleoplasm. It is found in the nucleolus. Transcription factor that plays an essential role in both trophoblast giant cell differentiation and in cardiac morphogenesis. Binds the DNA sequence 5'-NRTCTG-3' (non-canonical E-box). Acts as a transcriptional repressor of SOX15. In the adult, could be required for ongoing expression of cardiac-specific genes. The protein is Heart- and neural crest derivatives-expressed protein 1 (HAND1) of Bos taurus (Bovine).